A 546-amino-acid polypeptide reads, in one-letter code: Sterol O-acyltransferase 1 (546 aa).

Methionine 1 is modified (N-acetylmethionine). Residues methionine 1–arginine 37 are disordered. The Cytoplasmic segment spans residues methionine 1–isoleucine 134. The residue at position 8 (serine 8) is a Phosphoserine. The segment covering arginine 27–arginine 37 has biased composition (polar residues). Histidine 133 is a cholesterol binding site. The chain crosses the membrane as a helical span at residues arginine 135–aspartate 156. Over tyrosine 157 to lysine 176 the chain is Lumenal. Residues leucine 177–tryptophan 202 form a helical membrane-spanning segment. Over alanine 203–isoleucine 214 the chain is Cytoplasmic. Residues tyrosine 215–leucine 240 traverse the membrane as a helical segment. Residues alanine 241 to serine 248 lie on the Lumenal side of the membrane. The helical transmembrane segment at arginine 249–proline 272 threads the bilayer. Residues arginine 273–arginine 315 are Cytoplasmic-facing. The chain crosses the membrane as a helical span at residues tryptophan 316–isoleucine 348. Over lysine 349 to serine 365 the chain is Lumenal. A helical transmembrane segment spans residues isoleucine 366–methionine 391. Topologically, residues leucine 392–arginine 439 are cytoplasmic. The FYXDWWN motif motif lies at phenylalanine 399–asparagine 405. Asparagine 411, arginine 414, asparagine 417, histidine 421, tyrosine 429, lysine 441, and serine 452 together coordinate an acyl-CoA. The helical transmembrane segment at phenylalanine 440–leucine 464 threads the bilayer. The active site involves histidine 456. The Lumenal portion of the chain corresponds to serine 465 to valine 470. The chain crosses the membrane as a helical span at residues leucine 471–valine 486. Residues asparagine 487–arginine 492 are Cytoplasmic-facing. The helical transmembrane segment at proline 493–cysteine 524 threads the bilayer. Cysteine 524 and cysteine 542 are oxidised to a cystine. Residues proline 525 to phenylalanine 546 lie on the Lumenal side of the membrane.

This sequence belongs to the membrane-bound acyltransferase family. Sterol o-acyltransferase subfamily. As to quaternary structure, may form homo- or heterodimers. Interacts with UBIAD1.

It is found in the endoplasmic reticulum membrane. The catalysed reaction is a sterol + a long-chain fatty acyl-CoA = a long-chain 3-hydroxysterol ester + CoA. The enzyme catalyses cholesterol + an acyl-CoA = a cholesterol ester + CoA. It catalyses the reaction cholesterol + (9Z)-octadecenoyl-CoA = cholesteryl (9Z-octadecenoate) + CoA. It carries out the reaction cholesterol + hexadecanoyl-CoA = cholesteryl hexadecanoate + CoA. The catalysed reaction is octadecanoyl-CoA + cholesterol = cholesteryl octadecanoate + CoA. The enzyme catalyses (9Z,12Z)-octadecadienoyl-CoA + cholesterol = cholesteryl (9Z,12Z)-octadecadienoate + CoA. It catalyses the reaction (5Z,8Z,11Z,14Z)-eicosatetraenoyl-CoA + cholesterol = cholesteryl (5Z,8Z,11Z,14Z)-eicosatetraenoate + CoA. It carries out the reaction (9Z)-hexadecenoyl-CoA + cholesterol = cholesteryl (9Z)-hexadecenoate + CoA. The catalysed reaction is (11Z)-octadecenoyl-CoA + cholesterol = cholesteryl (11Z)-octadecenoate + CoA. The enzyme catalyses (7Z)-octadecenoyl-CoA + cholesterol = cholesteryl (7Z)-octadecenoate + CoA. Catalyzes the formation of fatty acid-cholesterol esters, which are less soluble in membranes than cholesterol. Plays a role in lipoprotein assembly and dietary cholesterol absorption. Preferentially utilizes oleoyl-CoA ((9Z)-octadecenoyl-CoA) as a substrate: shows a higher activity towards an acyl-CoA substrate with a double bond at the delta-9 position (9Z) than towards saturated acyl-CoA or an unsaturated acyl-CoA with a double bond at the delta-7 (7Z) or delta-11 (11Z) positions. This Cricetulus griseus (Chinese hamster) protein is Sterol O-acyltransferase 1 (SOAT1).